Reading from the N-terminus, the 165-residue chain is Large ribosomal subunit protein uL10 (165 aa).

This sequence belongs to the universal ribosomal protein uL10 family. Part of the ribosomal stalk of the 50S ribosomal subunit. The N-terminus interacts with L11 and the large rRNA to form the base of the stalk. The C-terminus forms an elongated spine to which L12 dimers bind in a sequential fashion forming a multimeric L10(L12)X complex.

Forms part of the ribosomal stalk, playing a central role in the interaction of the ribosome with GTP-bound translation factors. The sequence is that of Large ribosomal subunit protein uL10 from Salmonella agona (strain SL483).